Consider the following 669-residue polypeptide: Methionine--tRNA ligase (669 aa).

The 'HIGH' region signature appears at 15 to 25; that stretch reads PYANGPAHIGH. Positions 146, 149, 158, and 162 each coordinate Zn(2+). A 'KMSKS' region motif is present at residues 328–332; it reads KFSKS. Lysine 331 provides a ligand contact to ATP. Residues 570–669 form the tRNA-binding domain; that stretch reads QFKALDLRVG…KEVPAGCGIR (100 aa).

Belongs to the class-I aminoacyl-tRNA synthetase family. MetG type 1 subfamily. As to quaternary structure, homodimer. Requires Zn(2+) as cofactor.

It localises to the cytoplasm. The catalysed reaction is tRNA(Met) + L-methionine + ATP = L-methionyl-tRNA(Met) + AMP + diphosphate. In terms of biological role, is required not only for elongation of protein synthesis but also for the initiation of all mRNA translation through initiator tRNA(fMet) aminoacylation. In Methanothrix thermoacetophila (strain DSM 6194 / JCM 14653 / NBRC 101360 / PT) (Methanosaeta thermophila), this protein is Methionine--tRNA ligase.